Here is a 383-residue protein sequence, read N- to C-terminus: Izumo sperm-egg fusion protein 1 (383 aa).

An N-terminal signal peptide occupies residues 1–21; the sequence is MGLHFTLLLAALANCLCPARL. 5 disulfides stabilise this stretch: Cys22–Cys149, Cys25–Cys152, Cys135–Cys159, Cys139–Cys165, and Cys182–Cys233. Residues 22-306 are Extracellular-facing; sequence CIICDPFVVA…HRPEKKLKSR (285 aa). The important for interaction with IZUMO1R stretch occupies residues 148 to 160; that stretch reads WCNKCEKQMHFCR. Residues 167-251 form the Ig-like C2-type domain; it reads ERQIEVHRLE…PATIIYYHVT (85 aa). Asn204 carries an N-linked (GlcNAc...) asparagine glycan. Residues 307–327 traverse the membrane as a helical segment; that stretch reads LLILLILGFVVLVASVIASVL. The Cytoplasmic portion of the chain corresponds to 328–383; the sequence is HFRKTRVKSKNSNVENKTSAAEFKSEAESPQKMGSRKLSQAEFHTDSSDKVEEADN. Residues 335-383 form a disordered region; sequence KSKNSNVENKTSAAEFKSEAESPQKMGSRKLSQAEFHTDSSDKVEEADN. Over residues 337–346 the composition is skewed to polar residues; sequence KNSNVENKTS. Ser339, Ser346, and Ser366 each carry phosphoserine. Basic and acidic residues predominate over residues 370 to 383; that stretch reads FHTDSSDKVEEADN. Phosphothreonine is present on Thr372.

The protein belongs to the Izumo family. As to quaternary structure, monomer, homodimer; disulfide-linked and homooligomer; depending on the context. Interacts with IZUMO1R/JUNO. IZUMO1 and IZUMO1R/JUNO form a complex with 1:1 stoichiometry. In gamete recognition, IZUMO1R/JUNO first binds to monomeric IZUMO1. The weak, but specific interaction with IZUMO1R/JUNO induces IZUMO1 homodimerization. The process follows a tight binding phase where IZUMO1 bends the entire structure towards the sperm membrane side through a thiol-disulfide exchange reaction. The molecule no longer binds to IZUMO1R/JUNO and instead binds to a putative second oocyte receptor. Interacts with ACE3. Part of a oolemmal binding multimeric complex (IZUMO1 complex) composed at least of IZUMO1 and GLIPR1L1; the complex assemblage is influenced by the maturation status of the male germ cell. Interacts with GLIPR1L1. Interacts with FREY; the interaction retains IZUMO1 at the endoplasmic reticulum membrane and coordinates IZUMO1 complex assembly. Interacts with WDR54. Forms a complex with SPACA6 and TMEM81 on spermatocyte cell membrane. Post-translationally, N-glycosylated. Glycosylation is not essential for fusion and for proper protein trafficking in sperm. In terms of processing, phosphorylated. The cytoplasmic C-terminus is phosphorylated and undergoes phosphorylation changes during epididymal transit. As to expression, expressed in sperm (at protein level).

It localises to the cell membrane. The protein resides in the cytoplasmic vesicle. Its subcellular location is the secretory vesicle. It is found in the acrosome membrane. Its function is as follows. Essential sperm cell-surface protein required for fertilization by acting as a ligand for IZUMO1R/JUNO receptor on egg. The IZUMO1:IZUMO1R/JUNO interaction is a necessary adhesion event between sperm and egg that is required for fertilization but is not sufficient for cell fusion. The ligand-receptor interaction probably does not act as a membrane 'fusogen'. Plays a critical role in sperm-oolemma binding prior to plasma membrane fusion. Can mediate cell-cell fusion in cultured mammalian cells independently of its binding to IZUMO1R/JUNO. This Rattus norvegicus (Rat) protein is Izumo sperm-egg fusion protein 1.